An 89-amino-acid chain; its full sequence is Neurotoxin beta-KTx 12 (89 aa).

The first 20 residues, 1–20 (MKQYIFFLALIVLVSTFAEA), serve as a signal peptide directing secretion. A propeptide spanning residues 21-39 (GKKTEILDKVKKVFSKAKD) is cleaved from the precursor. One can recognise a BetaSPN-type CS-alpha/beta domain in the interval 53 to 89 (ELGCPFIDKWCEDHCESKKLVGKCENFDCSCVKLGGK). Disulfide bonds link cysteine 56-cysteine 76, cysteine 63-cysteine 81, and cysteine 67-cysteine 83.

Belongs to the long chain scorpion toxin family. Class 2 subfamily. As to expression, expressed by the venom gland.

Its subcellular location is the secreted. Its function is as follows. Inhibits voltage-gated potassium channel. In Lychas mucronatus (Chinese swimming scorpion), this protein is Neurotoxin beta-KTx 12.